Reading from the N-terminus, the 829-residue chain is Cadherin-3 (829 aa).

The N-terminal stretch at 1-24 is a signal peptide; it reads MGLPRGPLASLLLLQVCWLQCAAS. The propeptide occupies 25–107; it reads EPCRAVFREA…SKRILRRHKR (83 aa). 5 consecutive Cadherin domains span residues 108–215, 216–328, 329–440, 441–546, and 547–650; these read DWVV…KPKF, TQDT…APMF, DPQK…APVF, VPPS…DHGP, and VPEP…CPGP. The Extracellular portion of the chain corresponds to 108–654; the sequence is DWVVAPISVP…ETCPGPWKGG (547 aa). N-linked (GlcNAc...) asparagine glycosylation occurs at Asn200. Asn566 carries N-linked (GlcNAc...) asparagine glycosylation. A helical transmembrane segment spans residues 655–677; sequence FILPVLGAVLALLFLLLVLLLLV. Residues 678-829 lie on the Cytoplasmic side of the membrane; sequence RKKRKIKEPL…ADMYGGGEDD (152 aa).

Interacts with CDCP1 and CTNNB1. In terms of tissue distribution, expressed in some normal epithelial tissues and in some carcinoma cell lines.

Its subcellular location is the cell membrane. Cadherins are calcium-dependent cell adhesion proteins. They preferentially interact with themselves in a homophilic manner in connecting cells; cadherins may thus contribute to the sorting of heterogeneous cell types. This is Cadherin-3 (CDH3) from Homo sapiens (Human).